The sequence spans 132 residues: Small ribosomal subunit protein uS8 (132 aa).

It belongs to the universal ribosomal protein uS8 family. As to quaternary structure, part of the 30S ribosomal subunit. Contacts proteins S5 and S12.

In terms of biological role, one of the primary rRNA binding proteins, it binds directly to 16S rRNA central domain where it helps coordinate assembly of the platform of the 30S subunit. In Corynebacterium glutamicum (strain R), this protein is Small ribosomal subunit protein uS8.